The chain runs to 360 residues: Photosystem II protein D1 3 (360 aa).

3 consecutive transmembrane segments (helical) span residues 29–46 (YVGW…AATI), 118–133 (HFLI…EWEL), and 142–156 (WICV…AATA). Residue H118 coordinates chlorophyll a. Residue Y126 participates in pheophytin a binding. [CaMn4O5] cluster contacts are provided by D170 and E189. A helical transmembrane segment spans residues 197 to 218 (FHQLGVAGVFGGALFSAMHGSL). Residue H198 coordinates chlorophyll a. A quinone is bound by residues H215 and 264 to 265 (SF). H215 contacts Fe cation. Residue H272 coordinates Fe cation. Residues 274-288 (FLAAWPVIGIWFTAL) form a helical membrane-spanning segment. [CaMn4O5] cluster is bound by residues H332, E333, D342, and A344. Positions 345–360 (SAESAPVAMIAPSING) are excised as a propeptide.

It belongs to the reaction center PufL/M/PsbA/D family. PSII is composed of 1 copy each of membrane proteins PsbA, PsbB, PsbC, PsbD, PsbE, PsbF, PsbH, PsbI, PsbJ, PsbK, PsbL, PsbM, PsbT, PsbX, PsbY, PsbZ, Psb30/Ycf12, peripheral proteins PsbO, CyanoQ (PsbQ), PsbU, PsbV and a large number of cofactors. It forms dimeric complexes. Precursor protein interacts with Ycf48. The cofactor is The D1/D2 heterodimer binds P680, chlorophylls that are the primary electron donor of PSII, and subsequent electron acceptors. It shares a non-heme iron and each subunit binds pheophytin, quinone, additional chlorophylls, carotenoids and lipids. D1 provides most of the ligands for the Mn4-Ca-O5 cluster of the oxygen-evolving complex (OEC). There is also a Cl(-1) ion associated with D1 and D2, which is required for oxygen evolution. The PSII complex binds additional chlorophylls, carotenoids and specific lipids.. C-terminally processed by CtpA; processing is essential to allow assembly of the oxygen-evolving complex and thus photosynthetic growth. Post-translationally, tyr-161 forms a radical intermediate that is referred to as redox-active TyrZ, YZ or Y-Z.

Its subcellular location is the cellular thylakoid membrane. It catalyses the reaction 2 a plastoquinone + 4 hnu + 2 H2O = 2 a plastoquinol + O2. Functionally, photosystem II (PSII) is a light-driven water:plastoquinone oxidoreductase that uses light energy to abstract electrons from H(2)O, generating O(2) and a proton gradient subsequently used for ATP formation. It consists of a core antenna complex that captures photons, and an electron transfer chain that converts photonic excitation into a charge separation. The D1/D2 (PsbA/PsbD) reaction center heterodimer binds P680, the primary electron donor of PSII as well as several subsequent electron acceptors. This Thermosynechococcus vestitus (strain NIES-2133 / IAM M-273 / BP-1) protein is Photosystem II protein D1 3.